The following is a 76-amino-acid chain: uncharacterized protein (76 aa).

Residues methionine 1–glycine 15 form the signal peptide.

This is an uncharacterized protein from Magallana gigas (Pacific oyster).